The primary structure comprises 486 residues: Betaine aldehyde dehydrogenase (486 aa).

Positions 23 and 90 each coordinate K(+). 147 to 149 (GAW) serves as a coordination point for NAD(+). K159 serves as the catalytic Charge relay system. NAD(+) contacts are provided by residues 173–176 (KPSE) and 226–229 (ESGT). L241 contacts K(+). Residue E247 is the Proton acceptor of the active site. NAD(+) contacts are provided by G249, C281, and E382. The active-site Nucleophile is C281. Cysteine sulfenic acid (-SOH) is present on C281. K(+) contacts are provided by K452 and G455. E459 functions as the Charge relay system in the catalytic mechanism.

This sequence belongs to the aldehyde dehydrogenase family. Dimer of dimers. K(+) is required as a cofactor.

It catalyses the reaction betaine aldehyde + NAD(+) + H2O = glycine betaine + NADH + 2 H(+). Its pathway is amine and polyamine biosynthesis; betaine biosynthesis via choline pathway; betaine from betaine aldehyde: step 1/1. Its function is as follows. Involved in the biosynthesis of the osmoprotectant glycine betaine. Catalyzes the irreversible oxidation of betaine aldehyde to the corresponding acid. This is Betaine aldehyde dehydrogenase from Vibrio campbellii (strain ATCC BAA-1116).